The chain runs to 520 residues: Pentatricopeptide repeat-containing protein At1g28690, mitochondrial (520 aa).

The N-terminal 19 residues, 1 to 19 (MRIFRFTSISPRILPSNHY), are a transit peptide targeting the mitochondrion. 11 PPR repeats span residues 68–98 (DLNI…LPKP), 99–133 (TLSA…GEKA), 134–168 (DGYT…RIIK), 174–208 (DDVL…NVVC), 209–235 (CTSM…TKVK), 236–271 (DIVV…GFHP), 272–306 (NIST…GVYT), 307–337 (HIKM…MQEK), 338–372 (NVFS…RIEP), 373–403 (NYVT…MQRD), and 409–439 (KMEH…MPER). The type E motif stretch occupies residues 444–520 (IWAALLSSCN…TIGRSWTSED (77 aa)).

This sequence belongs to the PPR family. PCMP-E subfamily.

It localises to the mitochondrion. This chain is Pentatricopeptide repeat-containing protein At1g28690, mitochondrial (PCMP-E34), found in Arabidopsis thaliana (Mouse-ear cress).